The primary structure comprises 590 residues: DNA primase (590 aa).

Residues 37–61 (CPFHKEKTPSFSVSPTKQFYHCFSC) form a CHC2-type zinc finger. Positions 255 to 337 (GRILVVEGYM…DKSLHFLFLP (83 aa)) constitute a Toprim domain. Residues glutamate 261, aspartate 305, and aspartate 307 each contribute to the Mg(2+) site.

This sequence belongs to the DnaG primase family. In terms of assembly, monomer. Interacts with DnaB. Zn(2+) serves as cofactor. The cofactor is Mg(2+).

It catalyses the reaction ssDNA + n NTP = ssDNA/pppN(pN)n-1 hybrid + (n-1) diphosphate.. In terms of biological role, RNA polymerase that catalyzes the synthesis of short RNA molecules used as primers for DNA polymerase during DNA replication. The polypeptide is DNA primase (Neisseria meningitidis serogroup A / serotype 4A (strain DSM 15465 / Z2491)).